Consider the following 262-residue polypeptide: G patch domain-containing protein 11 (262 aa).

3 stretches are compositionally biased toward basic and acidic residues: residues Leu39–Glu61, Glu114–Asn127, and Gln136–Lys165. Disordered regions lie at residues Leu39 to Gln71 and Gly88 to Ala169. The stretch at Lys41 to Ala62 forms a coiled coil. Residues Ser70–Val116 form the G-patch domain.

The protein belongs to the GPATCH11 family.

It localises to the chromosome. The protein localises to the centromere. The protein resides in the kinetochore. The sequence is that of G patch domain-containing protein 11 (gpatch11) from Danio rerio (Zebrafish).